The sequence spans 92 residues: MELTSTRKKANAITSSILNRIAIRGQRKVADALGINESQISRWKGDFIPKMGMLLAVLEWGVEDEELAELAKKVAHLLTKEKPQDCGNSFEA.

The segment at residues 26–45 (QRKVADALGINESQISRWKG) is a DNA-binding region (H-T-H motif).

It belongs to the lambda phage CII protein family. In terms of assembly, homotetramer.

In terms of biological role, binds to two promoters, P(RE) and Pa23 and activate transcription from these promoters. This Salmonella typhimurium (Bacteriophage P22) protein is Transcriptional activator protein C1 (C1).